Here is a 361-residue protein sequence, read N- to C-terminus: Holliday junction branch migration complex subunit RuvB (361 aa).

Residues methionine 1–tyrosine 183 form a large ATPase domain (RuvB-L) region. ATP-binding positions include leucine 22, arginine 23, glycine 64, lysine 67, threonine 68, threonine 69, glutamate 130 to phenylalanine 132, arginine 173, tyrosine 183, and arginine 220. Threonine 68 is a Mg(2+) binding site. The interval serine 184–glutamate 254 is small ATPAse domain (RuvB-S). The interval lysine 257–glutamine 361 is head domain (RuvB-H). Arginine 312 and arginine 317 together coordinate DNA.

The protein belongs to the RuvB family. Homohexamer. Forms an RuvA(8)-RuvB(12)-Holliday junction (HJ) complex. HJ DNA is sandwiched between 2 RuvA tetramers; dsDNA enters through RuvA and exits via RuvB. An RuvB hexamer assembles on each DNA strand where it exits the tetramer. Each RuvB hexamer is contacted by two RuvA subunits (via domain III) on 2 adjacent RuvB subunits; this complex drives branch migration. In the full resolvosome a probable DNA-RuvA(4)-RuvB(12)-RuvC(2) complex forms which resolves the HJ.

The protein localises to the cytoplasm. The enzyme catalyses ATP + H2O = ADP + phosphate + H(+). Functionally, the RuvA-RuvB-RuvC complex processes Holliday junction (HJ) DNA during genetic recombination and DNA repair, while the RuvA-RuvB complex plays an important role in the rescue of blocked DNA replication forks via replication fork reversal (RFR). RuvA specifically binds to HJ cruciform DNA, conferring on it an open structure. The RuvB hexamer acts as an ATP-dependent pump, pulling dsDNA into and through the RuvAB complex. RuvB forms 2 homohexamers on either side of HJ DNA bound by 1 or 2 RuvA tetramers; 4 subunits per hexamer contact DNA at a time. Coordinated motions by a converter formed by DNA-disengaged RuvB subunits stimulates ATP hydrolysis and nucleotide exchange. Immobilization of the converter enables RuvB to convert the ATP-contained energy into a lever motion, pulling 2 nucleotides of DNA out of the RuvA tetramer per ATP hydrolyzed, thus driving DNA branch migration. The RuvB motors rotate together with the DNA substrate, which together with the progressing nucleotide cycle form the mechanistic basis for DNA recombination by continuous HJ branch migration. Branch migration allows RuvC to scan DNA until it finds its consensus sequence, where it cleaves and resolves cruciform DNA. The protein is Holliday junction branch migration complex subunit RuvB of Pseudarthrobacter chlorophenolicus (strain ATCC 700700 / DSM 12829 / CIP 107037 / JCM 12360 / KCTC 9906 / NCIMB 13794 / A6) (Arthrobacter chlorophenolicus).